The sequence spans 493 residues: Galactose-1-phosphate uridylyltransferase (493 aa).

Belongs to the galactose-1-phosphate uridylyltransferase type 2 family.

Its subcellular location is the cytoplasm. It catalyses the reaction alpha-D-galactose 1-phosphate + UDP-alpha-D-glucose = alpha-D-glucose 1-phosphate + UDP-alpha-D-galactose. The protein operates within carbohydrate metabolism; galactose metabolism. This Lactococcus lactis subsp. cremoris (strain SK11) protein is Galactose-1-phosphate uridylyltransferase.